The following is a 356-amino-acid chain: Heat-inducible transcription repressor HrcA (356 aa).

The protein belongs to the HrcA family.

Its function is as follows. Negative regulator of class I heat shock genes (grpE-dnaK-dnaJ and groELS operons). Prevents heat-shock induction of these operons. In Chlorobaculum tepidum (strain ATCC 49652 / DSM 12025 / NBRC 103806 / TLS) (Chlorobium tepidum), this protein is Heat-inducible transcription repressor HrcA.